The chain runs to 314 residues: Glutamyl-Q tRNA(Asp) synthetase (314 aa).

Residues 14-18 and E50 each bind L-glutamate; that span reads RFAPS. Positions 17–27 match the 'HIGH' region motif; that stretch reads PSPTGPLHVGS. C106, C108, Y129, and C133 together coordinate Zn(2+). 2 residues coordinate L-glutamate: Y187 and R205. Positions 243–247 match the 'KMSKS' region motif; the sequence is KLSKR. Residue K246 participates in ATP binding.

This sequence belongs to the class-I aminoacyl-tRNA synthetase family. GluQ subfamily. It depends on Zn(2+) as a cofactor.

Its function is as follows. Catalyzes the tRNA-independent activation of glutamate in presence of ATP and the subsequent transfer of glutamate onto a tRNA(Asp). Glutamate is transferred on the 2-amino-5-(4,5-dihydroxy-2-cyclopenten-1-yl) moiety of the queuosine in the wobble position of the QUC anticodon. The polypeptide is Glutamyl-Q tRNA(Asp) synthetase (Geobacter sulfurreducens (strain ATCC 51573 / DSM 12127 / PCA)).